The chain runs to 319 residues: Class I histocompatibility antigen, Non-RT1.A alpha-1 chain (319 aa).

A signal peptide spans 1–24 (MGAMAPRTLLLLLAAVLAPTQTWA). The tract at residues 25-114 (GSHSLRYFHT…LLSYYNQSEG (90 aa)) is alpha-1. Topologically, residues 25-307 (GSHSLRYFHT…WEPSPSTDSN (283 aa)) are extracellular. A glycan (N-linked (GlcNAc...) asparagine) is linked at Asn110. The segment at 115-206 (GSHTIQRMYG…ERGKETLLRS (92 aa)) is alpha-2. 2 disulfide bridges follow: Cys125/Cys188 and Cys227/Cys283. The tract at residues 207 to 298 (DPPEAHVTLH…GLPEPLSQRW (92 aa)) is alpha-3. The region spanning 209 to 295 (PEAHVTLHPR…EHEGLPEPLS (87 aa)) is the Ig-like C1-type domain. N-linked (GlcNAc...) asparagine glycosylation occurs at Asn280. The tract at residues 299-307 (EPSPSTDSN) is connecting peptide. Residues 308–319 (LLLLFLELWQFL) traverse the membrane as a helical segment.

The protein belongs to the MHC class I family. Heterodimer of an alpha chain and a beta chain (beta-2-microglobulin).

It localises to the membrane. In terms of biological role, involved in the presentation of foreign antigens to the immune system. The protein is Class I histocompatibility antigen, Non-RT1.A alpha-1 chain (RT1-Aw2) of Rattus norvegicus (Rat).